Here is a 434-residue protein sequence, read N- to C-terminus: 3-phosphoshikimate 1-carboxyvinyltransferase (434 aa).

3-phosphoshikimate-binding residues include Lys-15, Ser-16, and Arg-20. Lys-15 serves as a coordination point for phosphoenolpyruvate. Phosphoenolpyruvate-binding residues include Gly-96 and Arg-124. 3-phosphoshikimate contacts are provided by Ser-169, Gln-171, Ser-195, Asp-319, and Lys-346. Residue Gln-171 participates in phosphoenolpyruvate binding. Asp-319 acts as the Proton acceptor in catalysis. Phosphoenolpyruvate-binding residues include Arg-350 and Arg-394.

This sequence belongs to the EPSP synthase family. In terms of assembly, monomer.

The protein localises to the cytoplasm. It carries out the reaction 3-phosphoshikimate + phosphoenolpyruvate = 5-O-(1-carboxyvinyl)-3-phosphoshikimate + phosphate. The protein operates within metabolic intermediate biosynthesis; chorismate biosynthesis; chorismate from D-erythrose 4-phosphate and phosphoenolpyruvate: step 6/7. Catalyzes the transfer of the enolpyruvyl moiety of phosphoenolpyruvate (PEP) to the 5-hydroxyl of shikimate-3-phosphate (S3P) to produce enolpyruvyl shikimate-3-phosphate and inorganic phosphate. The protein is 3-phosphoshikimate 1-carboxyvinyltransferase of Chlorobaculum tepidum (strain ATCC 49652 / DSM 12025 / NBRC 103806 / TLS) (Chlorobium tepidum).